The chain runs to 52 residues: uncharacterized protein (52 aa).

A helical membrane pass occupies residues 7 to 27; it reads MFQLFVFIIFAAVVFAAVTGF.

It is found in the membrane. This is an uncharacterized protein from Bacillus subtilis (strain 168).